The chain runs to 512 residues: Retinaldehyde dehydrogenase 3 (512 aa).

The segment at 1 to 23 (MATANGAVENGQPDGKPPALPRP) is disordered. A2 is modified (N-acetylalanine). NAD(+) is bound by residues K204, E207, and 257 to 262 (GSTEVG). E280 functions as the Proton acceptor in the catalytic mechanism. The active-site Nucleophile is the C314. Q361 and E411 together coordinate NAD(+).

This sequence belongs to the aldehyde dehydrogenase family. As to quaternary structure, homotetramer.

The protein localises to the cytoplasm. The catalysed reaction is all-trans-retinal + NAD(+) + H2O = all-trans-retinoate + NADH + 2 H(+). The enzyme catalyses retinal + NAD(+) + H2O = retinoate + NADH + 2 H(+). It catalyses the reaction all-trans-13,14-dihydroretinal + NAD(+) + H2O = all-trans-13,14-dihydroretinoate + NADH + 2 H(+). It functions in the pathway cofactor metabolism; retinol metabolism. Functionally, catalyzes the NAD-dependent oxidation of aldehyde substrates, such as all-trans-retinal and all-trans-13,14-dihydroretinal, to their corresponding carboxylic acids, all-trans-retinoate and all-trans-13,14-dihydroretinoate, respectively. High specificity for all-trans-retinal as substrate, can also accept acetaldehyde as substrate in vitro but with lower affinity. Required for the biosynthesis of normal levels of retinoate in the embryonic ocular and nasal regions; a critical lipid in the embryonic development of the eye and the nasal region. The chain is Retinaldehyde dehydrogenase 3 (Aldh1a3) from Rattus norvegicus (Rat).